The primary structure comprises 629 residues: Mitochondrial Rho GTPase 1 (629 aa).

At 1 to 600 the chain is on the cytoplasmic side; sequence MSTAVRICVC…PRSEEPPADR (600 aa). Positions 2 to 170 constitute a Miro 1 domain; it reads STAVRICVCG…FYLCQKAVTH (169 aa). Residues 11 to 18, 59 to 63, and 115 to 118 contribute to the GTP site; these read GDEGTGKS, DTSAR, and NKSD. 2 consecutive EF-hand domains span residues 186–221 and 306–341; these read ACVD…SFDK and AGYR…TPGL. Residues D199, D201, D203, Y205, E210, D319, D321, D323, and E330 each coordinate Ca(2+). The Miro 2 domain maps to 421-585; it reads RNVVLCYILG…FVALAEAATN (165 aa). GTP is bound by residues 430–437, 466–470, and 535–538; these read GSSGAGKS, ELQGG, and LKAD. A helical; Anchor for type IV membrane protein membrane pass occupies residues 601–621; the sequence is ASLYMALGATACAALAAFMIW. Residues 622–629 lie on the Mitochondrial intermembrane side of the membrane; sequence RRSTSNAA.

It belongs to the mitochondrial Rho GTPase family.

It is found in the mitochondrion outer membrane. In terms of biological role, mitochondrial GTPase involved in mitochondrial trafficking. Probably involved in control of anterograde transport of mitochondria and their subcellular distribution. This Neurospora crassa (strain ATCC 24698 / 74-OR23-1A / CBS 708.71 / DSM 1257 / FGSC 987) protein is Mitochondrial Rho GTPase 1 (gem-1).